Here is a 213-residue protein sequence, read N- to C-terminus: ATP synthase peripheral stalk subunit OSCP, mitochondrial (213 aa).

A mitochondrion-targeting transit peptide spans 1 to 23; sequence MATPAVSGLSRQVRCFSTSVVRP. The short motif at 5 to 23 is the SIFI-degron element; sequence AVSGLSRQVRCFSTSVVRP. An N6-acetyllysine mark is found at Lys54, Lys60, Lys70, and Lys73. Lys90 is modified (N6-succinyllysine). N6-acetyllysine; alternate is present on residues Lys158 and Lys162. Lys158 and Lys162 each carry N6-succinyllysine; alternate. N6-acetyllysine is present on residues Lys172, Lys176, and Lys192. Lys199 bears the N6-succinyllysine mark.

The protein belongs to the ATPase delta chain family. In terms of assembly, component of the ATP synthase complex composed at least of ATP5F1A/subunit alpha, ATP5F1B/subunit beta, ATP5MC1/subunit c (homooctomer), MT-ATP6/subunit a, MT-ATP8/subunit 8, ATP5ME/subunit e, ATP5MF/subunit f, ATP5MG/subunit g, ATP5MK/subunit k, ATP5MJ/subunit j, ATP5F1C/subunit gamma, ATP5F1D/subunit delta, ATP5F1E/subunit epsilon, ATP5PF/subunit F6, ATP5PB/subunit b, ATP5PD/subunit d, ATP5PO/subunit OSCP. ATP synthase complex consists of a soluble F(1) head domain (subunits alpha(3) and beta(3)) - the catalytic core - and a membrane F(0) domain - the membrane proton channel (subunits c, a, 8, e, f, g, k and j). These two domains are linked by a central stalk (subunits gamma, delta, and epsilon) rotating inside the F1 region and a stationary peripheral stalk (subunits F6, b, d, and OSCP). In terms of processing, acetylation at Lys-162 decreases ATP production. Deacetylated by SIRT3. In response to mitochondrial stress, the precursor protein is ubiquitinated by the SIFI complex in the cytoplasm before mitochondrial import, leading to its degradation. Within the SIFI complex, UBR4 initiates ubiquitin chain that are further elongated or branched by KCMF1.

The protein resides in the mitochondrion. The protein localises to the mitochondrion inner membrane. In terms of biological role, subunit OSCP, of the mitochondrial membrane ATP synthase complex (F(1)F(0) ATP synthase or Complex V) that produces ATP from ADP in the presence of a proton gradient across the membrane which is generated by electron transport complexes of the respiratory chain. ATP synthase complex consist of a soluble F(1) head domain - the catalytic core - and a membrane F(1) domain - the membrane proton channel. These two domains are linked by a central stalk rotating inside the F(1) region and a stationary peripheral stalk. During catalysis, ATP synthesis in the catalytic domain of F(1) is coupled via a rotary mechanism of the central stalk subunits to proton translocation. In vivo, can only synthesize ATP although its ATP hydrolase activity can be activated artificially in vitro. Part of the complex F(0) domain. Part of the complex F(0) domain and the peripheric stalk, which acts as a stator to hold the catalytic alpha(3)beta(3) subcomplex and subunit a/ATP6 static relative to the rotary elements. The protein is ATP synthase peripheral stalk subunit OSCP, mitochondrial of Pongo abelii (Sumatran orangutan).